The primary structure comprises 422 residues: Serine--tRNA ligase (422 aa).

Thr-229–Glu-231 contributes to the L-serine binding site. Residue Arg-258–Glu-260 participates in ATP binding. Residue Glu-281 participates in L-serine binding. Glu-345–Ser-348 serves as a coordination point for ATP. Ser-379 contacts L-serine.

It belongs to the class-II aminoacyl-tRNA synthetase family. Type-1 seryl-tRNA synthetase subfamily. In terms of assembly, homodimer. The tRNA molecule binds across the dimer.

It is found in the cytoplasm. The enzyme catalyses tRNA(Ser) + L-serine + ATP = L-seryl-tRNA(Ser) + AMP + diphosphate + H(+). It carries out the reaction tRNA(Sec) + L-serine + ATP = L-seryl-tRNA(Sec) + AMP + diphosphate + H(+). It functions in the pathway aminoacyl-tRNA biosynthesis; selenocysteinyl-tRNA(Sec) biosynthesis; L-seryl-tRNA(Sec) from L-serine and tRNA(Sec): step 1/1. In terms of biological role, catalyzes the attachment of serine to tRNA(Ser). Is also able to aminoacylate tRNA(Sec) with serine, to form the misacylated tRNA L-seryl-tRNA(Sec), which will be further converted into selenocysteinyl-tRNA(Sec). The sequence is that of Serine--tRNA ligase from Methanosarcina mazei (strain ATCC BAA-159 / DSM 3647 / Goe1 / Go1 / JCM 11833 / OCM 88) (Methanosarcina frisia).